Here is a 610-residue protein sequence, read N- to C-terminus: DNA mismatch repair protein MutL (610 aa).

It belongs to the DNA mismatch repair MutL/HexB family.

Its function is as follows. This protein is involved in the repair of mismatches in DNA. It is required for dam-dependent methyl-directed DNA mismatch repair. May act as a 'molecular matchmaker', a protein that promotes the formation of a stable complex between two or more DNA-binding proteins in an ATP-dependent manner without itself being part of a final effector complex. The polypeptide is DNA mismatch repair protein MutL (Rickettsia conorii (strain ATCC VR-613 / Malish 7)).